A 97-amino-acid chain; its full sequence is Probable lipopolysaccharide assembly protein A (97 aa).

A run of 2 helical transmembrane segments spans residues 1 to 21 and 46 to 66; these read MIKY…AITI and VAIL…FFYI. Positions 67-95 form a coiled coil; the sequence is KLKLKNMALARQVKRQTLQINELTTTRDK.

It belongs to the LapA family.

It is found in the cell inner membrane. In terms of biological role, involved in the assembly of lipopolysaccharide (LPS). This chain is Probable lipopolysaccharide assembly protein A, found in Haemophilus influenzae (strain ATCC 51907 / DSM 11121 / KW20 / Rd).